Reading from the N-terminus, the 222-residue chain is ATP-dependent dethiobiotin synthetase BioD 2 (222 aa).

Thr-17 is a binding site for Mg(2+). Lys-38 is a catalytic residue. A substrate-binding site is contributed by Thr-42. 2 residues coordinate Mg(2+): Asp-55 and Glu-112. Residues Asp-55, 112 to 115, 172 to 173, 201 to 203, and Glu-208 each bind ATP; these read EGCG, NR, and PYL.

Belongs to the dethiobiotin synthetase family. In terms of assembly, homodimer. Mg(2+) is required as a cofactor.

It localises to the cytoplasm. It carries out the reaction (7R,8S)-7,8-diammoniononanoate + CO2 + ATP = (4R,5S)-dethiobiotin + ADP + phosphate + 3 H(+). It functions in the pathway cofactor biosynthesis; biotin biosynthesis; biotin from 7,8-diaminononanoate: step 1/2. In terms of biological role, catalyzes a mechanistically unusual reaction, the ATP-dependent insertion of CO2 between the N7 and N8 nitrogen atoms of 7,8-diaminopelargonic acid (DAPA, also called 7,8-diammoniononanoate) to form a ureido ring. This chain is ATP-dependent dethiobiotin synthetase BioD 2, found in Yersinia pestis.